The chain runs to 382 residues: Glutaminyl-peptide cyclotransferase-like protein (382 aa).

A helical membrane pass occupies residues 35–55 (LLPLLLALAVGSAFYTIWSGW). Residues Cys167 and Cys191 are joined by a disulfide bond. A Zn(2+)-binding site is contributed by Asp186. Catalysis depends on Glu225, which acts as the Proton acceptor. Residue Glu226 coordinates Zn(2+). Asp269 serves as the catalytic Proton acceptor. Residue His351 coordinates Zn(2+).

The protein belongs to the glutaminyl-peptide cyclotransferase family.

The protein resides in the golgi apparatus membrane. The enzyme catalyses N-terminal L-glutaminyl-[peptide] = N-terminal 5-oxo-L-prolyl-[peptide] + NH4(+). In terms of biological role, responsible for the biosynthesis of pyroglutamyl peptides. The sequence is that of Glutaminyl-peptide cyclotransferase-like protein (QPCTL) from Macaca fascicularis (Crab-eating macaque).